The chain runs to 130 residues: Glycine cleavage system H protein (130 aa).

The 82-residue stretch at 22–103 (KAYIGISDCA…PYGSWIAAIE (82 aa)) folds into the Lipoyl-binding domain. Lysine 63 carries the N6-lipoyllysine modification.

Belongs to the GcvH family. In terms of assembly, the glycine cleavage system is composed of four proteins: P, T, L and H. (R)-lipoate is required as a cofactor.

The glycine cleavage system catalyzes the degradation of glycine. The H protein shuttles the methylamine group of glycine from the P protein to the T protein. The protein is Glycine cleavage system H protein of Clostridium botulinum (strain Okra / Type B1).